Consider the following 348-residue polypeptide: Putative agmatine deiminase (348 aa).

The active-site Amidino-cysteine intermediate is the Cys335.

The protein belongs to the agmatine deiminase family.

The enzyme catalyses agmatine + H2O = N-carbamoylputrescine + NH4(+). The protein is Putative agmatine deiminase of Legionella pneumophila subsp. pneumophila (strain Philadelphia 1 / ATCC 33152 / DSM 7513).